The chain runs to 469 residues: Glutamine synthetase (469 aa).

The GS beta-grasp domain occupies 14–98; it reads NDVKYVDLRF…VVCDVLEPTT (85 aa). The region spanning 106 to 469 is the GS catalytic domain; the sequence is PRGIAKKAMA…PVEFEMYYSV (364 aa). The Mg(2+) site is built by Glu131 and Glu133. Glu209 is a binding site for ATP. Residues Glu214 and Glu221 each contribute to the Mg(2+) site. L-glutamate-binding positions include 265–266 and Gly266; that span reads NG. His270 provides a ligand contact to Mg(2+). Residues 272 to 274 and Ser274 contribute to the ATP site; that span reads HQS. L-glutamate-binding residues include Arg322, Glu328, and Arg340. Positions 340, 345, and 353 each coordinate ATP. Residue Glu358 participates in Mg(2+) binding. L-glutamate is bound at residue Arg360. Tyr398 is subject to O-AMP-tyrosine.

Belongs to the glutamine synthetase family. In terms of assembly, oligomer of 12 subunits arranged in the form of two hexameric ring. Mg(2+) serves as cofactor.

It localises to the cytoplasm. The enzyme catalyses L-glutamate + NH4(+) + ATP = L-glutamine + ADP + phosphate + H(+). With respect to regulation, the activity of this enzyme could be controlled by adenylation under conditions of abundant glutamine. In terms of biological role, catalyzes the ATP-dependent biosynthesis of glutamine from glutamate and ammonia. This Azorhizobium caulinodans (strain ATCC 43989 / DSM 5975 / JCM 20966 / LMG 6465 / NBRC 14845 / NCIMB 13405 / ORS 571) protein is Glutamine synthetase.